The chain runs to 89 residues: UPF0223 protein BAMEG_4214 (89 aa).

It belongs to the UPF0223 family.

The protein is UPF0223 protein BAMEG_4214 of Bacillus anthracis (strain CDC 684 / NRRL 3495).